A 63-amino-acid chain; its full sequence is Large ribosomal subunit protein uL29 (63 aa).

It belongs to the universal ribosomal protein uL29 family.

The polypeptide is Large ribosomal subunit protein uL29 (Listeria innocua serovar 6a (strain ATCC BAA-680 / CLIP 11262)).